Here is a 115-residue protein sequence, read N- to C-terminus: Large ribosomal subunit protein uL18 (115 aa).

The tract at residues 1–24 (MISKPDKNKLRQKRHTRVRGKISG) is disordered. A compositionally biased stretch (basic residues) spans 10–20 (LRQKRHTRVRG).

Belongs to the universal ribosomal protein uL18 family. Part of the 50S ribosomal subunit; part of the 5S rRNA/L5/L18/L25 subcomplex. Contacts the 5S and 23S rRNAs.

This is one of the proteins that bind and probably mediate the attachment of the 5S RNA into the large ribosomal subunit, where it forms part of the central protuberance. This chain is Large ribosomal subunit protein uL18, found in Lactococcus lactis subsp. cremoris (strain MG1363).